Consider the following 147-residue polypeptide: Peroxynitrite isomerase (147 aa).

A heme b-binding site is contributed by H137.

The protein belongs to the nitrobindin family. Homodimer. It depends on heme b as a cofactor.

It catalyses the reaction peroxynitrite = nitrate. Its pathway is nitrogen metabolism. Heme-binding protein able to scavenge peroxynitrite and to protect free L-tyrosine against peroxynitrite-mediated nitration, by acting as a peroxynitrite isomerase that converts peroxynitrite to nitrate. Therefore, this protein likely plays a role in peroxynitrite sensing and in the detoxification of reactive nitrogen and oxygen species (RNS and ROS, respectively). Is able to bind nitric oxide (NO) in vitro, but may act as a sensor of peroxynitrite levels in vivo. In Frankia alni (strain DSM 45986 / CECT 9034 / ACN14a), this protein is Peroxynitrite isomerase.